The following is an 81-amino-acid chain: Translational regulator CsrA (81 aa).

Residues 59 to 71 (SQMQHLEQGNFPT) are compositionally biased toward polar residues. The disordered stretch occupies residues 59-81 (SQMQHLEQGNFPTSFDDDDFFNR).

It belongs to the CsrA/RsmA family. As to quaternary structure, homodimer; the beta-strands of each monomer intercalate to form a hydrophobic core, while the alpha-helices form wings that extend away from the core.

It is found in the cytoplasm. Its function is as follows. A key translational regulator that binds mRNA to regulate translation initiation and/or mRNA stability. Mediates global changes in gene expression, shifting from rapid growth to stress survival by linking envelope stress, the stringent response and the catabolite repression systems. Usually binds in the 5'-UTR; binding at or near the Shine-Dalgarno sequence prevents ribosome-binding, repressing translation, binding elsewhere in the 5'-UTR can activate translation and/or stabilize the mRNA. Its function is antagonized by small RNA(s). This is Translational regulator CsrA from Psychrobacter sp. (strain PRwf-1).